Reading from the N-terminus, the 157-residue chain is Endoribonuclease YbeY (157 aa).

Zn(2+)-binding residues include H111, H115, and H121.

The protein belongs to the endoribonuclease YbeY family. Zn(2+) is required as a cofactor.

Its subcellular location is the cytoplasm. In terms of biological role, single strand-specific metallo-endoribonuclease involved in late-stage 70S ribosome quality control and in maturation of the 3' terminus of the 16S rRNA. In Pseudomonas putida (strain W619), this protein is Endoribonuclease YbeY.